The primary structure comprises 482 residues: tRNA sulfurtransferase (482 aa).

One can recognise a THUMP domain in the interval 61-165 (DVTLSVLTQT…NDKLNLIIAR (105 aa)). Residues 183–184 (LI), K265, G287, and Q296 contribute to the ATP site. C344 and C456 are oxidised to a cystine. The Rhodanese domain maps to 404-482 (LGSDVVVLDI…GYKNVKVYRP (79 aa)). C456 acts as the Cysteine persulfide intermediate in catalysis.

It belongs to the ThiI family.

It localises to the cytoplasm. It catalyses the reaction [ThiI sulfur-carrier protein]-S-sulfanyl-L-cysteine + a uridine in tRNA + 2 reduced [2Fe-2S]-[ferredoxin] + ATP + H(+) = [ThiI sulfur-carrier protein]-L-cysteine + a 4-thiouridine in tRNA + 2 oxidized [2Fe-2S]-[ferredoxin] + AMP + diphosphate. The catalysed reaction is [ThiS sulfur-carrier protein]-C-terminal Gly-Gly-AMP + S-sulfanyl-L-cysteinyl-[cysteine desulfurase] + AH2 = [ThiS sulfur-carrier protein]-C-terminal-Gly-aminoethanethioate + L-cysteinyl-[cysteine desulfurase] + A + AMP + 2 H(+). The protein operates within cofactor biosynthesis; thiamine diphosphate biosynthesis. In terms of biological role, catalyzes the ATP-dependent transfer of a sulfur to tRNA to produce 4-thiouridine in position 8 of tRNAs, which functions as a near-UV photosensor. Also catalyzes the transfer of sulfur to the sulfur carrier protein ThiS, forming ThiS-thiocarboxylate. This is a step in the synthesis of thiazole, in the thiamine biosynthesis pathway. The sulfur is donated as persulfide by IscS. This is tRNA sulfurtransferase from Aliivibrio fischeri (strain MJ11) (Vibrio fischeri).